The sequence spans 499 residues: Pyruvate kinase (499 aa).

Substrate is bound at residue R50. K(+)-binding residues include N52, S54, D84, and T85. N52–H55 is a binding site for ATP. R91 provides a ligand contact to ATP. E241 serves as a coordination point for Mg(2+). Residues G264, D265, and T297 each contribute to the substrate site. Mg(2+) is bound at residue D265.

Belongs to the pyruvate kinase family. In terms of assembly, homotetramer. It depends on Mg(2+) as a cofactor. The cofactor is K(+).

The catalysed reaction is pyruvate + ATP = phosphoenolpyruvate + ADP + H(+). Its pathway is carbohydrate degradation; glycolysis; pyruvate from D-glyceraldehyde 3-phosphate: step 5/5. Its activity is regulated as follows. Activated by fructose 2,6-bisphosphate, activated by the effector in a non cooperative manner. This Leishmania mexicana protein is Pyruvate kinase (PYK).